A 251-amino-acid chain; its full sequence is Derlin-1 (251 aa).

Position 2 is an N-acetylserine (Ser-2). Over 2 to 15 (SDIGDWFRSIPAIT) the chain is Cytoplasmic. A helical membrane pass occupies residues 16–31 (RYWFAATVAVPLVGKL). The Lumenal portion of the chain corresponds to 32–69 (GLISPAYLFLWPEAFLYRFQIWRPITATFYFPVGPGTG). Residues 70 to 89 (FLYLVNLYFLYQYSTRLETG) traverse the membrane as a helical segment. Residues 90–94 (AFDGR) are Cytoplasmic-facing. A helical membrane pass occupies residues 95–115 (PADYLFMLLFNWICIVITGLA). Residues 116–122 (MDMQLLM) are Lumenal-facing. A helical transmembrane segment spans residues 123 to 137 (IPLIMSVLYVWAQLN). The Cytoplasmic portion of the chain corresponds to 138–154 (RDMIVSFWFGTRFKACY). A helical membrane pass occupies residues 155-166 (LPWVILGFNYII). The Lumenal portion of the chain corresponds to 167–170 (GGSV). Residues 171 to 189 (INELIGNLVGHLYFFLMFR) form a helical membrane-spanning segment. Residues 190–251 (YPMDLGGRNF…WGQGFRLGDQ (62 aa)) are Cytoplasmic-facing. At Ser-201 the chain carries Phosphoserine. Phosphothreonine is present on Thr-202. Ser-226 carries the post-translational modification Phosphoserine. The tract at residues 229–251 (RAADQNGGGGRHNWGQGFRLGDQ) is disordered. Residues 241-248 (NWGQGFRL) carry the SHP-box motif.

The protein belongs to the derlin family. As to quaternary structure, homotetramer. The four subunits of the tetramer are arranged in a twofold symmetry. Forms heterooligomers with DERL2 and DERL3; binding to DERL3 is poorer than that between DERL2 and DERL3. Interacts (via SHP-box motif) with VCP. Interacts with AMFR, SELENOS, SEL1L, SELENOK and SYVN1, as well as with SEL1L-SYVN1 and VCP-SELENOS protein complexes; this interaction is weaker than that observed between DERL2 and these complexes. Interacts with NGLY1 and YOD1. Does not bind to EDEM1. Interacts with DNAJB9. Interacts with RNF103. Interacts with HM13. Interacts with XBP1 isoform 1 (via luminal/ectodomain domain); the interaction obviates the need for ectodomain shedding prior HM13/SPP-mediated XBP1 isoform 1 cleavage. Interacts with the signal recognition particle/SRP and the SRP receptor; in the process of endoplasmic reticulum stress-induced pre-emptive quality control. May interact with UBXN6. Interacts with ZFAND2B; probably through VCP. Interacts with CCDC47. Interacts with C18orf32. May interact with TRAM1. Forms a complex with SVIP and VCP/p97. In terms of assembly, (Microbial infection) Interacts with the cytomegalovirus US11 protein. Ubiquitous.

The protein localises to the endoplasmic reticulum membrane. Its function is as follows. Functional component of endoplasmic reticulum-associated degradation (ERAD) for misfolded lumenal proteins. Forms homotetramers which encircle a large channel traversing the endoplasmic reticulum (ER) membrane. This allows the retrotranslocation of misfolded proteins from the ER into the cytosol where they are ubiquitinated and degraded by the proteasome. The channel has a lateral gate within the membrane which provides direct access to membrane proteins with no need to reenter the ER lumen first. May mediate the interaction between VCP and the misfolded protein. Also involved in endoplasmic reticulum stress-induced pre-emptive quality control, a mechanism that selectively attenuates the translocation of newly synthesized proteins into the endoplasmic reticulum and reroutes them to the cytosol for proteasomal degradation. By controlling the steady-state expression of the IGF1R receptor, indirectly regulates the insulin-like growth factor receptor signaling pathway. Functionally, (Microbial infection) In case of infection by cytomegaloviruses, it plays a central role in the export from the ER and subsequent degradation of MHC class I heavy chains via its interaction with US11 viral protein, which recognizes and associates with MHC class I heavy chains. Also participates in the degradation process of misfolded cytomegalovirus US2 protein. This is Derlin-1 from Homo sapiens (Human).